Reading from the N-terminus, the 111-residue chain is Pyrimidine/purine nucleoside phosphorylase 1 (111 aa).

This sequence belongs to the nucleoside phosphorylase PpnP family.

The catalysed reaction is a purine D-ribonucleoside + phosphate = a purine nucleobase + alpha-D-ribose 1-phosphate. It carries out the reaction adenosine + phosphate = alpha-D-ribose 1-phosphate + adenine. The enzyme catalyses cytidine + phosphate = cytosine + alpha-D-ribose 1-phosphate. It catalyses the reaction guanosine + phosphate = alpha-D-ribose 1-phosphate + guanine. The catalysed reaction is inosine + phosphate = alpha-D-ribose 1-phosphate + hypoxanthine. It carries out the reaction thymidine + phosphate = 2-deoxy-alpha-D-ribose 1-phosphate + thymine. The enzyme catalyses uridine + phosphate = alpha-D-ribose 1-phosphate + uracil. It catalyses the reaction xanthosine + phosphate = alpha-D-ribose 1-phosphate + xanthine. Functionally, catalyzes the phosphorolysis of diverse nucleosides, yielding D-ribose 1-phosphate and the respective free bases. Can use uridine, adenosine, guanosine, cytidine, thymidine, inosine and xanthosine as substrates. Also catalyzes the reverse reactions. This chain is Pyrimidine/purine nucleoside phosphorylase 1, found in Psychrobacter arcticus (strain DSM 17307 / VKM B-2377 / 273-4).